The following is a 784-amino-acid chain: DNA repair and recombination protein RAD54-like (784 aa).

Residues 1–54 (MRRSLAPSQRGPMRPESRHSFTPPLLKKNKRSCQQELEREQELDRKRQSALRDA) form a disordered region. The interval 2–9 (RRSLAPSQ) is required for chromatin remodeling, strand pairing activities and coupling of ATPase activity. Residue Ser-20 is modified to Phosphoserine. Residue Thr-22 is modified to Phosphothreonine. Residues 36-47 (ELEREQELDRKR) show a composition bias toward basic and acidic residues. Residues 172–346 (EGKRGNFNGC…YSLVNFVNPE (175 aa)) form the Helicase ATP-binding domain. 185 to 192 (DEMGLGKT) serves as a coordination point for ATP. A DEGH box motif is present at residues 297 to 300 (DEGH). In terms of domain architecture, Helicase C-terminal spans 503-660 (LLDFMLAAIR…NNESAEKHFT (158 aa)). The interval 751-784 (EEAASEQPEEKPDRRKRPSTPPSDDSADEDFLGF) is disordered. Over residues 775–784 (DSADEDFLGF) the composition is skewed to acidic residues.

It belongs to the SNF2/RAD54 helicase family. Interacts (via N-terminus) with spn-A/Rad51.

Its subcellular location is the nucleus. Its function is as follows. Involved in mitotic DNA repair and meiotic recombination. Functions in the recombinational DNA repair pathway. Essential for interhomolog gene conversion (GC), but may have a less important role in intersister GC than spn-A/Rad51. In the presence of DNA, spn-A/Rad51 enhances the ATPase activity of okr/Rad54. The protein is DNA repair and recombination protein RAD54-like of Drosophila yakuba (Fruit fly).